A 586-amino-acid chain; its full sequence is Glutamate--tRNA ligase (586 aa).

The short motif at 114 to 124 is the 'HIGH' region element; that stretch reads PNPNGPWHVGH. Composition is skewed to basic and acidic residues over residues 431 to 443 and 459 to 468; these read ARGE…HEAV and HPEHPDRGDR. Positions 431-468 are disordered; the sequence is ARGEGPEESHEAVEVPVDDGPDEATPQVHPEHPDRGDR.

The protein belongs to the class-I aminoacyl-tRNA synthetase family. Glutamate--tRNA ligase type 2 subfamily.

It is found in the cytoplasm. It carries out the reaction tRNA(Glu) + L-glutamate + ATP = L-glutamyl-tRNA(Glu) + AMP + diphosphate. In terms of biological role, catalyzes the attachment of glutamate to tRNA(Glu) in a two-step reaction: glutamate is first activated by ATP to form Glu-AMP and then transferred to the acceptor end of tRNA(Glu). In Halobacterium salinarum (strain ATCC 29341 / DSM 671 / R1), this protein is Glutamate--tRNA ligase.